The chain runs to 211 residues: Thiamine-phosphate synthase (211 aa).

4-amino-2-methyl-5-(diphosphooxymethyl)pyrimidine is bound by residues 37–41 (QLRIK) and Asn-69. The Mg(2+) site is built by Asp-70 and Asp-89. Position 108 (Ser-108) interacts with 4-amino-2-methyl-5-(diphosphooxymethyl)pyrimidine. Position 134 to 136 (134 to 136 (TQT)) interacts with 2-[(2R,5Z)-2-carboxy-4-methylthiazol-5(2H)-ylidene]ethyl phosphate. A 4-amino-2-methyl-5-(diphosphooxymethyl)pyrimidine-binding site is contributed by Lys-137. 2-[(2R,5Z)-2-carboxy-4-methylthiazol-5(2H)-ylidene]ethyl phosphate-binding positions include Gly-166 and 186 to 187 (VS).

Belongs to the thiamine-phosphate synthase family. The cofactor is Mg(2+).

The catalysed reaction is 2-[(2R,5Z)-2-carboxy-4-methylthiazol-5(2H)-ylidene]ethyl phosphate + 4-amino-2-methyl-5-(diphosphooxymethyl)pyrimidine + 2 H(+) = thiamine phosphate + CO2 + diphosphate. The enzyme catalyses 2-(2-carboxy-4-methylthiazol-5-yl)ethyl phosphate + 4-amino-2-methyl-5-(diphosphooxymethyl)pyrimidine + 2 H(+) = thiamine phosphate + CO2 + diphosphate. It carries out the reaction 4-methyl-5-(2-phosphooxyethyl)-thiazole + 4-amino-2-methyl-5-(diphosphooxymethyl)pyrimidine + H(+) = thiamine phosphate + diphosphate. It participates in cofactor biosynthesis; thiamine diphosphate biosynthesis; thiamine phosphate from 4-amino-2-methyl-5-diphosphomethylpyrimidine and 4-methyl-5-(2-phosphoethyl)-thiazole: step 1/1. In terms of biological role, condenses 4-methyl-5-(beta-hydroxyethyl)thiazole monophosphate (THZ-P) and 2-methyl-4-amino-5-hydroxymethyl pyrimidine pyrophosphate (HMP-PP) to form thiamine monophosphate (TMP). The protein is Thiamine-phosphate synthase of Salmonella paratyphi A (strain ATCC 9150 / SARB42).